The chain runs to 339 residues: DNA-directed RNA polymerase subunit alpha (339 aa).

Residues 1–233 (MVREEVAGST…DLFLPFLHAE (233 aa)) are alpha N-terminal domain (alpha-NTD). The segment at 264–339 (KKGIPLNCIF…IDLLKNKLSF (76 aa)) is alpha C-terminal domain (alpha-CTD).

Belongs to the RNA polymerase alpha chain family. In plastids the minimal PEP RNA polymerase catalytic core is composed of four subunits: alpha, beta, beta', and beta''. When a (nuclear-encoded) sigma factor is associated with the core the holoenzyme is formed, which can initiate transcription.

The protein resides in the plastid. Its subcellular location is the chloroplast. It catalyses the reaction RNA(n) + a ribonucleoside 5'-triphosphate = RNA(n+1) + diphosphate. In terms of biological role, DNA-dependent RNA polymerase catalyzes the transcription of DNA into RNA using the four ribonucleoside triphosphates as substrates. The chain is DNA-directed RNA polymerase subunit alpha from Elymus hystrix (Eastern bottlebrush grass).